Reading from the N-terminus, the 36-residue chain is Pancreatic polypeptide (36 aa).

The residue at position 36 (Y36) is a Tyrosine amide.

Belongs to the NPY family.

The protein localises to the secreted. Hormone secreted by pancreatic cells that acts as a regulator of pancreatic and gastrointestinal functions probably by signaling through the G protein-coupled receptor NPY4R2. The chain is Pancreatic polypeptide (PPY) from Didelphis virginiana (North American opossum).